The following is a 140-amino-acid chain: Large ribosomal subunit protein bL17 (140 aa).

Belongs to the bacterial ribosomal protein bL17 family. In terms of assembly, part of the 50S ribosomal subunit. Contacts protein L32.

In Paracoccus denitrificans (strain Pd 1222), this protein is Large ribosomal subunit protein bL17.